A 335-amino-acid chain; its full sequence is Pro-cathepsin H (335 aa).

An N-terminal signal peptide occupies residues 1–22; that stretch reads MWAVLPLLCAGAWLLGAPACGA. The propeptide at 23–97 is activation peptide; it reads AELAANSLEK…DELKRKYLWS (75 aa). Asn-72 and Asn-101 each carry an N-linked (GlcNAc...) asparagine glycan. 4 disulfide bridges follow: Cys-102–Cys-327, Cys-138–Cys-181, Cys-172–Cys-214, and Cys-272–Cys-322. Residues 106-115 constitute a propeptide that is removed on maturation; that stretch reads KSNYLRGTGP. The active site involves Cys-141. N-linked (GlcNAc...) asparagine glycosylation is present at Asn-230. Active-site residues include His-281 and Asn-301.

This sequence belongs to the peptidase C1 family. As to quaternary structure, composed of a mini chain and a large chain. The large chain may be split into heavy and light chain. All chains are held together by disulfide bonds.

Its subcellular location is the lysosome. It catalyses the reaction Hydrolysis of proteins, acting as an aminopeptidase (notably, cleaving Arg-|-Xaa bonds) as well as an endopeptidase.. In terms of biological role, important for the overall degradation of proteins in lysosomes. The protein is Pro-cathepsin H (CTSH) of Bos taurus (Bovine).